The primary structure comprises 246 residues: MKIYLKFKSYNKRICKLLQLFKLEHDQNCSMGLLINHNSLELYNRDNVNQKPIKVDFTSKKNHYRCHHFRRKNEVLYRVSGIKNSYFPTILDATAGLGNDAFIFSFLGCKVIMIERHPIVAALLKDGLQRGYQDKKIGHWLQTRLHLIVNDSLKMLEIPILQPDVIYLDPMYPFHHKKSLPKKDMQFFRQLIGHNYDSKKLLEVSRKLAKNRIIVKRPYYAKPLSEDKVNHIVTTRNHRFDIYQPF.

Residues 115 to 116 and D169 each bind S-adenosyl-L-methionine; that span reads ER.

This sequence belongs to the methyltransferase superfamily. RsmJ family.

The protein localises to the cytoplasm. The catalysed reaction is guanosine(1516) in 16S rRNA + S-adenosyl-L-methionine = N(2)-methylguanosine(1516) in 16S rRNA + S-adenosyl-L-homocysteine + H(+). Functionally, specifically methylates the guanosine in position 1516 of 16S rRNA. The polypeptide is Ribosomal RNA small subunit methyltransferase J (Buchnera aphidicola subsp. Acyrthosiphon pisum (strain APS) (Acyrthosiphon pisum symbiotic bacterium)).